Reading from the N-terminus, the 124-residue chain is Small ribosomal subunit protein uS12 (124 aa).

The residue at position 89 (Asp-89) is a 3-methylthioaspartic acid. The segment at 103–124 (DTAGVKDRRQSRSKYGAKSPKE) is disordered.

It belongs to the universal ribosomal protein uS12 family. As to quaternary structure, part of the 30S ribosomal subunit. Contacts proteins S8 and S17. May interact with IF1 in the 30S initiation complex.

With S4 and S5 plays an important role in translational accuracy. Functionally, interacts with and stabilizes bases of the 16S rRNA that are involved in tRNA selection in the A site and with the mRNA backbone. Located at the interface of the 30S and 50S subunits, it traverses the body of the 30S subunit contacting proteins on the other side and probably holding the rRNA structure together. The combined cluster of proteins S8, S12 and S17 appears to hold together the shoulder and platform of the 30S subunit. In Prochlorococcus marinus (strain NATL1A), this protein is Small ribosomal subunit protein uS12.